Here is a 213-residue protein sequence, read N- to C-terminus: Pyridoxine/pyridoxamine 5'-phosphate oxidase (213 aa).

Residues 8 to 11 and Lys66 contribute to the substrate site; that span reads RQEY. Residues 61 to 66, 76 to 77, Arg82, Lys83, and Gln105 each bind FMN; these read RTVLLK and YT. Substrate contacts are provided by Tyr123, Arg127, and Ser131. FMN is bound by residues 140–141 and Trp185; that span reads QS. A substrate-binding site is contributed by 191–193; the sequence is RLH. Arg195 serves as a coordination point for FMN.

The protein belongs to the pyridoxamine 5'-phosphate oxidase family. As to quaternary structure, homodimer. Requires FMN as cofactor.

The catalysed reaction is pyridoxamine 5'-phosphate + O2 + H2O = pyridoxal 5'-phosphate + H2O2 + NH4(+). It catalyses the reaction pyridoxine 5'-phosphate + O2 = pyridoxal 5'-phosphate + H2O2. It functions in the pathway cofactor metabolism; pyridoxal 5'-phosphate salvage; pyridoxal 5'-phosphate from pyridoxamine 5'-phosphate: step 1/1. Its pathway is cofactor metabolism; pyridoxal 5'-phosphate salvage; pyridoxal 5'-phosphate from pyridoxine 5'-phosphate: step 1/1. In terms of biological role, catalyzes the oxidation of either pyridoxine 5'-phosphate (PNP) or pyridoxamine 5'-phosphate (PMP) into pyridoxal 5'-phosphate (PLP). This is Pyridoxine/pyridoxamine 5'-phosphate oxidase from Bacteroides thetaiotaomicron (strain ATCC 29148 / DSM 2079 / JCM 5827 / CCUG 10774 / NCTC 10582 / VPI-5482 / E50).